We begin with the raw amino-acid sequence, 286 residues long: Glycine--tRNA ligase alpha subunit (286 aa).

Belongs to the class-II aminoacyl-tRNA synthetase family. In terms of assembly, tetramer of two alpha and two beta subunits.

Its subcellular location is the cytoplasm. The enzyme catalyses tRNA(Gly) + glycine + ATP = glycyl-tRNA(Gly) + AMP + diphosphate. The polypeptide is Glycine--tRNA ligase alpha subunit (Campylobacter lari (strain RM2100 / D67 / ATCC BAA-1060)).